The following is a 104-amino-acid chain: Putative ankyrin repeat protein L677 (104 aa).

ANK repeat units lie at residues 16 to 43, 44 to 73, and 75 to 102; these read FNKS…NPNL, DISH…SNSV, and LEAY…NKSI.

In Acanthamoeba polyphaga (Amoeba), this protein is Putative ankyrin repeat protein L677.